Consider the following 375-residue polypeptide: tRNA-specific 2-thiouridylase MnmA (375 aa).

Residues 20–27 (AMSGGVDS) and Leu-46 each bind ATP. Cys-114 (nucleophile) is an active-site residue. Cys-114 and Cys-211 are joined by a disulfide. Gly-138 serves as a coordination point for ATP. Positions 160–162 (RDQ) are interaction with tRNA. The Cysteine persulfide intermediate role is filled by Cys-211.

It belongs to the MnmA/TRMU family.

It localises to the cytoplasm. It carries out the reaction S-sulfanyl-L-cysteinyl-[protein] + uridine(34) in tRNA + AH2 + ATP = 2-thiouridine(34) in tRNA + L-cysteinyl-[protein] + A + AMP + diphosphate + H(+). Catalyzes the 2-thiolation of uridine at the wobble position (U34) of tRNA, leading to the formation of s(2)U34. The protein is tRNA-specific 2-thiouridylase MnmA of Ruegeria pomeroyi (strain ATCC 700808 / DSM 15171 / DSS-3) (Silicibacter pomeroyi).